Consider the following 604-residue polypeptide: Elongation factor 4 (604 aa).

The tr-type G domain occupies 7 to 190; sequence SRLRNFCIIA…IVDRVPAPPD (184 aa). Residues 19 to 24 and 136 to 139 each bind GTP; these read DHGKST and NKID.

It belongs to the TRAFAC class translation factor GTPase superfamily. Classic translation factor GTPase family. LepA subfamily.

It is found in the cell inner membrane. It carries out the reaction GTP + H2O = GDP + phosphate + H(+). In terms of biological role, required for accurate and efficient protein synthesis under certain stress conditions. May act as a fidelity factor of the translation reaction, by catalyzing a one-codon backward translocation of tRNAs on improperly translocated ribosomes. Back-translocation proceeds from a post-translocation (POST) complex to a pre-translocation (PRE) complex, thus giving elongation factor G a second chance to translocate the tRNAs correctly. Binds to ribosomes in a GTP-dependent manner. The protein is Elongation factor 4 of Synechococcus sp. (strain RCC307).